Reading from the N-terminus, the 261-residue chain is MKEKMKEKLTVIKVGGKIVEEEATLNQLLNDFAAIEGHKVLVHGGGRSATKIAAQLGIDSKMVNGRRITDAETLKVVTMVYGGLVNKNIVAGLQARGVNALGLTGADMNVIRSMKRPVKEVDYGFVGDVERVDSTLLSDLIHKGVVPVMAPLTHDGQGNMLNTNADTIAGETAKALSAIFDVTLVYCFEKKGVLRDENDDESVIPQINHAEFQRYIAEGVIQGGMIPKLENSFEAINAGVSEVVITLASAIHTDGGTRIKK.

Substrate contacts are provided by residues 45–46 (GG), arginine 67, and asparagine 162.

The protein belongs to the acetylglutamate kinase family. ArgB subfamily.

The protein resides in the cytoplasm. It carries out the reaction N-acetyl-L-glutamate + ATP = N-acetyl-L-glutamyl 5-phosphate + ADP. It participates in amino-acid biosynthesis; L-arginine biosynthesis; N(2)-acetyl-L-ornithine from L-glutamate: step 2/4. Its function is as follows. Catalyzes the ATP-dependent phosphorylation of N-acetyl-L-glutamate. The polypeptide is Acetylglutamate kinase (Bacteroides fragilis (strain ATCC 25285 / DSM 2151 / CCUG 4856 / JCM 11019 / LMG 10263 / NCTC 9343 / Onslow / VPI 2553 / EN-2)).